A 262-amino-acid polypeptide reads, in one-letter code: Small ribosomal subunit protein eS4 (262 aa).

In terms of domain architecture, S4 RNA-binding spans 42–105; that stretch reads LPLVVFLRNR…NEHFRLVYDV (64 aa). Residues 178–211 form the KOW domain; sequence GRLVMVTGGRNLGRVGVIVHREKHEGGFDLVHIK.

It belongs to the eukaryotic ribosomal protein eS4 family. As to quaternary structure, component of the small ribosomal subunit. Mature ribosomes consist of a small (40S) and a large (60S) subunit. The 40S subunit contains about 32 different proteins and 1 molecule of RNA (18S). The 60S subunit contains 45 different proteins and 3 molecules of RNA (25S, 5.8S and 5S).

The protein localises to the cytoplasm. Functionally, component of the ribosome, a large ribonucleoprotein complex responsible for the synthesis of proteins in the cell. The small ribosomal subunit (SSU) binds messenger RNAs (mRNAs) and translates the encoded message by selecting cognate aminoacyl-transfer RNA (tRNA) molecules. The large subunit (LSU) contains the ribosomal catalytic site termed the peptidyl transferase center (PTC), which catalyzes the formation of peptide bonds, thereby polymerizing the amino acids delivered by tRNAs into a polypeptide chain. The nascent polypeptides leave the ribosome through a tunnel in the LSU and interact with protein factors that function in enzymatic processing, targeting, and the membrane insertion of nascent chains at the exit of the ribosomal tunnel. The protein is Small ribosomal subunit protein eS4 (RPS42) of Candida albicans (strain SC5314 / ATCC MYA-2876) (Yeast).